Reading from the N-terminus, the 979-residue chain is Putative cellulose synthase-like protein D6 (979 aa).

The interval 1 to 24 (MMDGESPLRHPRISHVSNSGSDFG) is disordered. Residues 14-24 (SHVSNSGSDFG) show a composition bias toward low complexity. The next 2 membrane-spanning stretches (helical) occupy residues 116-136 (IIIA…ALFL) and 147-167 (ALWL…SWLL). Residues aspartate 247 and aspartate 683 contribute to the active site. 6 helical membrane passes run 765 to 785 (IFIL…HFVV), 788 to 808 (LTGS…GLAV), 837 to 857 (LVAV…SFTL), 882 to 902 (ALMI…LFAV), 913 to 933 (WSNL…MYPF), and 946 to 966 (TVVY…YITI).

This sequence belongs to the glycosyltransferase 2 family. Plant cellulose synthase-like D subfamily.

The protein resides in the golgi apparatus membrane. In terms of biological role, thought to be a Golgi-localized beta-glycan synthase that polymerize the backbones of noncellulosic polysaccharides (hemicelluloses) of plant cell wall. The sequence is that of Putative cellulose synthase-like protein D6 (CSLD6) from Arabidopsis thaliana (Mouse-ear cress).